The chain runs to 123 residues: Ribosome-binding factor A (123 aa).

Belongs to the RbfA family. In terms of assembly, monomer. Binds 30S ribosomal subunits, but not 50S ribosomal subunits or 70S ribosomes.

The protein localises to the cytoplasm. One of several proteins that assist in the late maturation steps of the functional core of the 30S ribosomal subunit. Associates with free 30S ribosomal subunits (but not with 30S subunits that are part of 70S ribosomes or polysomes). Required for efficient processing of 16S rRNA. May interact with the 5'-terminal helix region of 16S rRNA. The protein is Ribosome-binding factor A of Rickettsia bellii (strain OSU 85-389).